The chain runs to 567 residues: Ribulokinase (567 aa).

The protein belongs to the ribulokinase family.

The catalysed reaction is D-ribulose + ATP = D-ribulose 5-phosphate + ADP + H(+). It carries out the reaction L-ribulose + ATP = L-ribulose 5-phosphate + ADP + H(+). It functions in the pathway carbohydrate degradation; L-arabinose degradation via L-ribulose; D-xylulose 5-phosphate from L-arabinose (bacterial route): step 2/3. This chain is Ribulokinase, found in Vibrio parahaemolyticus serotype O3:K6 (strain RIMD 2210633).